Reading from the N-terminus, the 414-residue chain is HERV-H LTR-associating protein 2 (414 aa).

Positions 1 to 22 (MKAQTALSFFLILITSLSGSQG) are cleaved as a signal peptide. Positions 61–131 (IHWKYQDSYK…YVGTAIQVIT (71 aa)) constitute an Ig-like V-type 1 domain. 2 N-linked (GlcNAc...) asparagine glycosylation sites follow: Asn90 and Asn103. An Ig-like C1-type domain is found at 138-222 (VGVFLTPVMK…ENSLLKQTWT (85 aa)). Disulfide bonds link Cys159/Cys210 and Cys243/Cys317. An Ig-like V-type 2 domain is found at 235–328 (QSEHVSLSCQ…ISSDEYTLLT (94 aa)). Asn318 carries N-linked (GlcNAc...) asparagine glycosylation. The chain crosses the membrane as a helical span at residues 345 to 365 (KGLWILVPSAILAAFLLIWSV). The tract at residues 383-414 (GAQQERCCVPPGERCPSAPDNGEENVPLSGKV) is disordered.

As to quaternary structure, interacts with TMIGD2. As to expression, expressed at high levels in colon, kidney, testis, lung and pancreas, and at lower levels in small intestine, liver and skeletal muscle. In immune cells, highly expressed in B-cells, dendritic cells and macrophages. Not detected in T-cells.

The protein localises to the membrane. In terms of biological role, through interaction with TMIGD2, costimulates T-cells in the context of TCR-mediated activation. Enhances T-cell proliferation and cytokine production via an AKT-dependent signaling cascade. The polypeptide is HERV-H LTR-associating protein 2 (HHLA2) (Homo sapiens (Human)).